The chain runs to 195 residues: Imidazoleglycerol-phosphate dehydratase (195 aa).

Belongs to the imidazoleglycerol-phosphate dehydratase family.

Its subcellular location is the cytoplasm. The catalysed reaction is D-erythro-1-(imidazol-4-yl)glycerol 3-phosphate = 3-(imidazol-4-yl)-2-oxopropyl phosphate + H2O. It participates in amino-acid biosynthesis; L-histidine biosynthesis; L-histidine from 5-phospho-alpha-D-ribose 1-diphosphate: step 6/9. The chain is Imidazoleglycerol-phosphate dehydratase from Cereibacter sphaeroides (strain ATCC 17029 / ATH 2.4.9) (Rhodobacter sphaeroides).